The following is a 169-amino-acid chain: Ribosome maturation factor RimM (169 aa).

Residues 97–169 enclose the PRC barrel domain; the sequence is NDEAYFTDLI…KIVVDWEYDY (73 aa).

Belongs to the RimM family. In terms of assembly, binds ribosomal protein uS19.

The protein localises to the cytoplasm. In terms of biological role, an accessory protein needed during the final step in the assembly of 30S ribosomal subunit, possibly for assembly of the head region. Essential for efficient processing of 16S rRNA. May be needed both before and after RbfA during the maturation of 16S rRNA. It has affinity for free ribosomal 30S subunits but not for 70S ribosomes. The sequence is that of Ribosome maturation factor RimM from Francisella philomiragia subsp. philomiragia (strain ATCC 25017 / CCUG 19701 / FSC 153 / O#319-036).